Here is a 337-residue protein sequence, read N- to C-terminus: D-alanine--D-alanine ligase (337 aa).

One can recognise an ATP-grasp domain in the interval 124–330; the sequence is KMWFSALGIP…FTEYLSLVIN (207 aa). 154 to 209 is a binding site for ATP; the sequence is ALANWGSIFIKAASQGSSVGCYKVDDSSKVAQVLKDAFGYAPYVVVEKTIKARELE. Mg(2+)-binding residues include Asp-284, Glu-297, and Asn-299.

The protein belongs to the D-alanine--D-alanine ligase family. Mg(2+) serves as cofactor. Requires Mn(2+) as cofactor.

The protein resides in the cytoplasm. The enzyme catalyses 2 D-alanine + ATP = D-alanyl-D-alanine + ADP + phosphate + H(+). Its pathway is cell wall biogenesis; peptidoglycan biosynthesis. Cell wall formation. The sequence is that of D-alanine--D-alanine ligase from Shewanella putrefaciens (strain CN-32 / ATCC BAA-453).